Consider the following 65-residue polypeptide: Large ribosomal subunit protein bL35 (65 aa).

Over residues 1–10 the composition is skewed to basic residues; it reads MPKMKSKSSA. The interval 1–21 is disordered; the sequence is MPKMKSKSSAKMRFSVRAGGT.

It belongs to the bacterial ribosomal protein bL35 family.

This Polynucleobacter necessarius subsp. necessarius (strain STIR1) protein is Large ribosomal subunit protein bL35.